A 70-amino-acid chain; its full sequence is Putative membrane protein insertion efficiency factor (70 aa).

Belongs to the UPF0161 family.

The protein resides in the cell inner membrane. Functionally, could be involved in insertion of integral membrane proteins into the membrane. The sequence is that of Putative membrane protein insertion efficiency factor from Francisella tularensis subsp. tularensis (strain SCHU S4 / Schu 4).